Here is a 193-residue protein sequence, read N- to C-terminus: Imidazoleglycerol-phosphate dehydratase (193 aa).

It belongs to the imidazoleglycerol-phosphate dehydratase family.

It is found in the cytoplasm. The enzyme catalyses D-erythro-1-(imidazol-4-yl)glycerol 3-phosphate = 3-(imidazol-4-yl)-2-oxopropyl phosphate + H2O. The protein operates within amino-acid biosynthesis; L-histidine biosynthesis; L-histidine from 5-phospho-alpha-D-ribose 1-diphosphate: step 6/9. The protein is Imidazoleglycerol-phosphate dehydratase of Saccharolobus islandicus (strain M.14.25 / Kamchatka #1) (Sulfolobus islandicus).